The following is a 396-amino-acid chain: DNA replication and repair protein RecF (396 aa).

30–37 lines the ATP pocket; sequence GANGSGKT.

This sequence belongs to the RecF family.

The protein resides in the cytoplasm. Its function is as follows. The RecF protein is involved in DNA metabolism; it is required for DNA replication and normal SOS inducibility. RecF binds preferentially to single-stranded, linear DNA. It also seems to bind ATP. In Thermomicrobium roseum (strain ATCC 27502 / DSM 5159 / P-2), this protein is DNA replication and repair protein RecF.